Here is a 620-residue protein sequence, read N- to C-terminus: Alkaline nuclease (620 aa).

Low complexity predominate over residues 1–10; it reads MAAAATPGAK. 2 disordered regions span residues 1 to 122 and 595 to 620; these read MAAA…SASA and ASRS…RSSR. Residues 11-23 are compositionally biased toward basic and acidic residues; the sequence is RPADPARDPDSPP. Pro residues predominate over residues 40–49; the sequence is RPAPPRPTSP. Positions 603 to 620 are enriched in low complexity; that stretch reads PAAADTTSSPPTAGRSSR.

This sequence belongs to the herpesviridae alkaline nuclease family. As to quaternary structure, interacts with major DNA-binding protein; this interaction increases the nuclease processivity of the alkaline exonuclease.

Its subcellular location is the host nucleus. The protein resides in the host cytoplasm. Its function is as follows. Plays a role in processing non linear or branched viral DNA intermediates in order to promote the production of mature packaged unit-length linear progeny viral DNA molecules. Exhibits endonuclease and exonuclease activities and accepts both double-stranded and single-stranded DNA as substrate. Exonuclease digestion of DNA is in the 5'-&gt; 3' direction and the products are 5'-monophosphate nucleosides. Additionally, forms a recombinase with the major DNA-binding protein, which displays strand exchange activity. The polypeptide is Alkaline nuclease (Homo sapiens (Human)).